Reading from the N-terminus, the 145-residue chain is Transcriptional regulator SlyA (145 aa).

The HTH marR-type domain occupies 2–135; it reads ELPLGSDLAR…LALLVARLEK (134 aa). The segment at residues 49 to 72 is a DNA-binding region (H-T-H motif); sequence QIQLAKAIGIEQPSLVRTLDQLEE.

The protein belongs to the SlyA family. As to quaternary structure, homodimer.

Transcription regulator that can specifically activate or repress expression of target genes. This chain is Transcriptional regulator SlyA, found in Pectobacterium atrosepticum (strain SCRI 1043 / ATCC BAA-672) (Erwinia carotovora subsp. atroseptica).